The primary structure comprises 851 residues: Envelope glycoprotein gp160 (851 aa).

The signal sequence occupies residues 1–32; that stretch reads MRVKEKYQHLWRWGWRWGTMLLGMLMICSATE. At 33-679 the chain is on the extracellular side; that stretch reads KLWVTVYFGV…ITNWLWYIKL (647 aa). Cysteine 54 and cysteine 74 are joined by a disulfide. N-linked (GlcNAc...) asparagine; by host glycans are attached at residues asparagine 88, asparagine 136, asparagine 141, asparagine 156, asparagine 160, asparagine 186, asparagine 197, asparagine 230, asparagine 234, asparagine 241, asparagine 262, asparagine 276, asparagine 295, asparagine 301, asparagine 332, asparagine 339, and asparagine 356. Cystine bridges form between cysteine 119/cysteine 205, cysteine 126/cysteine 196, cysteine 131/cysteine 157, cysteine 218/cysteine 247, and cysteine 228/cysteine 239. The V1 stretch occupies residues 131 to 156; sequence CTDLKNDTNTNSSSGRMIMEKGEIKN. Residues 157–196 form a V2 region; sequence CSFNISTSKRGKVQKEYAFFYKLDIIPIDNDTTSYTLTSC. The segment at 296 to 330 is V3; sequence CTRPNNNTRKKIRIQRGPGRAFVTIGKIGNMRQAH. Cysteine 296 and cysteine 331 are disulfide-bonded. Residues 364 to 374 are CD4-binding loop; sequence SSGGDPEIVTH. Cystine bridges form between cysteine 378-cysteine 440 and cysteine 385-cysteine 413. Positions 385–413 are V4; the sequence is CNSTQLFNSTWSTKGSNNTEGSDTITLPC. Residues asparagine 386, asparagine 392, asparagine 401, asparagine 443, and asparagine 458 are each glycosylated (N-linked (GlcNAc...) asparagine; by host). 2 V5 regions span residues 456 to 466 and 458 to 466; these read SNNESEIFRPG and NESEIFRPG. The tract at residues 507–527 is fusion peptide; it reads AVGIGALFLGFLGAAGSTMGA. The immunosuppression stretch occupies residues 569 to 587; the sequence is KQLQARILAVERYLKDQQL. A disulfide bond links cysteine 593 and cysteine 599. N-linked (GlcNAc...) asparagine; by host glycosylation is found at asparagine 606, asparagine 611, asparagine 620, asparagine 632, and asparagine 669. Positions 628 to 662 form a coiled coil; that stretch reads REINNYTSLIHSLIEESQNQQEKNEQELLELDKWA. The tract at residues 657–678 is MPER; binding to GalCer; sequence ELDKWASLWNWFNITNWLWYIK. The helical transmembrane segment at 680–700 threads the bilayer; sequence FIMIVGGLVGLRIVFAVLSIV. The Cytoplasmic segment spans residues 701–851; that stretch reads NRVRQGYSPL…IRQGLERILL (151 aa). The YXXL motif; contains endocytosis signal signature appears at 707-710; it reads YSPL. Residues 713 to 735 form a disordered region; the sequence is QTHLPNPRGPDRPEGIEEEGGER. A lipid anchor (S-palmitoyl cysteine; by host) is attached at cysteine 759. Residues 850-851 carry the Di-leucine internalization motif motif; the sequence is LL.

It belongs to the HIV-1 env protein family. As to quaternary structure, the mature envelope protein (Env) consists of a homotrimer of non-covalently associated gp120-gp41 heterodimers. The resulting complex protrudes from the virus surface as a spike. There seems to be as few as 10 spikes on the average virion. Interacts with host CD4, CCR5 and CXCR4. Gp120 also interacts with the C-type lectins CD209/DC-SIGN and CLEC4M/DC-SIGNR (collectively referred to as DC-SIGN(R)). Gp120 and gp41 interact with GalCer. Gp120 interacts with host ITGA4/ITGB7 complex; on CD4+ T-cells, this interaction results in rapid activation of integrin ITGAL/LFA-1, which facilitates efficient cell-to-cell spreading of HIV-1. Gp120 interacts with cell-associated heparan sulfate; this interaction increases virus infectivity on permissive cells and may be involved in infection of CD4- cells. In terms of assembly, the mature envelope protein (Env) consists of a homotrimer of non-covalently associated gp120-gp41 heterodimers. The resulting complex protrudes from the virus surface as a spike. There seems to be as few as 10 spikes on the average virion. Highly glycosylated by host. The high number of glycan on the protein is reffered to as 'glycan shield' because it contributes to hide protein sequence from adaptive immune system. Post-translationally, palmitoylation of the transmembrane protein and of Env polyprotein (prior to its proteolytic cleavage) is essential for their association with host cell membrane lipid rafts. Palmitoylation is therefore required for envelope trafficking to classical lipid rafts, but not for viral replication. In terms of processing, specific enzymatic cleavages in vivo yield mature proteins. Envelope glycoproteins are synthesized as an inactive precursor that is heavily N-glycosylated and processed likely by host cell furin in the Golgi to yield the mature SU and TM proteins. The cleavage site between SU and TM requires the minimal sequence [KR]-X-[KR]-R. About 2 of the 9 disulfide bonds of gp41 are reduced by P4HB/PDI, following binding to CD4 receptor.

The protein resides in the virion membrane. It is found in the host cell membrane. Its subcellular location is the host endosome membrane. Its function is as follows. Oligomerizes in the host endoplasmic reticulum into predominantly trimers. In a second time, gp160 transits in the host Golgi, where glycosylation is completed. The precursor is then proteolytically cleaved in the trans-Golgi and thereby activated by cellular furin or furin-like proteases to produce gp120 and gp41. Attaches the virus to the host lymphoid cell by binding to the primary receptor CD4. This interaction induces a structural rearrangement creating a high affinity binding site for a chemokine coreceptor like CXCR4 and/or CCR5. Acts as a ligand for CD209/DC-SIGN and CLEC4M/DC-SIGNR, which are respectively found on dendritic cells (DCs), and on endothelial cells of liver sinusoids and lymph node sinuses. These interactions allow capture of viral particles at mucosal surfaces by these cells and subsequent transmission to permissive cells. HIV subverts the migration properties of dendritic cells to gain access to CD4+ T-cells in lymph nodes. Virus transmission to permissive T-cells occurs either in trans (without DCs infection, through viral capture and transmission), or in cis (following DCs productive infection, through the usual CD4-gp120 interaction), thereby inducing a robust infection. In trans infection, bound virions remain infectious over days and it is proposed that they are not degraded, but protected in non-lysosomal acidic organelles within the DCs close to the cell membrane thus contributing to the viral infectious potential during DCs' migration from the periphery to the lymphoid tissues. On arrival at lymphoid tissues, intact virions recycle back to DCs' cell surface allowing virus transmission to CD4+ T-cells. In terms of biological role, acts as a class I viral fusion protein. Under the current model, the protein has at least 3 conformational states: pre-fusion native state, pre-hairpin intermediate state, and post-fusion hairpin state. During fusion of viral and target intracellular membranes, the coiled coil regions (heptad repeats) assume a trimer-of-hairpins structure, positioning the fusion peptide in close proximity to the C-terminal region of the ectodomain. The formation of this structure appears to drive apposition and subsequent fusion of viral and target cell membranes. Complete fusion occurs in host cell endosomes and is dynamin-dependent, however some lipid transfer might occur at the plasma membrane. The virus undergoes clathrin-dependent internalization long before endosomal fusion, thus minimizing the surface exposure of conserved viral epitopes during fusion and reducing the efficacy of inhibitors targeting these epitopes. Membranes fusion leads to delivery of the nucleocapsid into the cytoplasm. In Homo sapiens (Human), this protein is Envelope glycoprotein gp160.